Here is a 133-residue protein sequence, read N- to C-terminus: MLSPEAERVLRYLVEVEELAEEVLADKRQIVDLDTKRNQNREGLRALQKDLSLSEDVMVCFGNMFIKMPHPETKEMIEKDQDHLDKEIEKLRKQLKVKVDRLFEAQGKPELKGFNLNPLNQDELKALKIILKG.

Belongs to the prefoldin subunit beta family. Component of the PAQosome complex which is responsible for the biogenesis of several protein complexes and which consists of R2TP complex members RUVBL1, RUVBL2, RPAP3 and PIH1D1, URI complex members PFDN2, PFDN6, PDRG1, UXT and URI1 as well as ASDURF, POLR2E and DNAAF10/WDR92.

Its subcellular location is the cytoplasm. In terms of biological role, may play a role in chaperone-mediated protein folding. In Pongo abelii (Sumatran orangutan), this protein is p53 and DNA damage-regulated protein 1 (PDRG1).